Consider the following 198-residue polypeptide: Recombination protein RecR (198 aa).

The segment at 57-72 adopts a C4-type zinc-finger fold; it reads CEKCNTFTEAQICEVC. The Toprim domain occupies 80–175; sequence TLLCVVETPA…AVTRLARGVP (96 aa).

The protein belongs to the RecR family.

Functionally, may play a role in DNA repair. It seems to be involved in an RecBC-independent recombinational process of DNA repair. It may act with RecF and RecO. This chain is Recombination protein RecR, found in Burkholderia cenocepacia (strain HI2424).